We begin with the raw amino-acid sequence, 711 residues long: C6 finger domain transcription factor nscR (711 aa).

The segment at residues 17-43 (CELCRERKVKCDKLDPCTNCSSAGVIC) is a DNA-binding region (zn(2)-C6 fungal-type). The disordered stretch occupies residues 372–394 (SPPKHINDSDFDPTTSHDVPDRE).

It localises to the nucleus. Its function is as follows. Transcription factor that specifically regulates the neosartoricin B biosynthesis gene cluster. The polypeptide is C6 finger domain transcription factor nscR (Trichophyton tonsurans (strain CBS 112818) (Scalp ringworm fungus)).